Consider the following 721-residue polypeptide: WD repeat and coiled-coil-containing protein (721 aa).

Met1 carries the N-acetylmethionine modification. 2 WD repeats span residues 55 to 98 (GQFE…MESS) and 154 to 194 (NTQG…LHRC). Phosphoserine occurs at positions 299, 468, 501, and 523. Over residues 520–537 (QPASLPRHSSTPDHTSTL) the composition is skewed to polar residues. The disordered stretch occupies residues 520–553 (QPASLPRHSSTPDHTSTLEPPRLPQRKNLQSEKE). Thr530 carries the post-translational modification Phosphothreonine. Positions 539–545 (PPRLPQR) are interaction with HCK. Positions 556-584 (QLSKEVEILSRNLVEMQRCLSELTNRLHN) form a coiled coil. 2 positions are modified to phosphoserine: Ser686 and Ser690.

As to quaternary structure, oligomer. Interacts with HCK (via SH3 domain). Phosphorylated on Tyr when associated with HCK.

This is WD repeat and coiled-coil-containing protein from Homo sapiens (Human).